A 289-amino-acid polypeptide reads, in one-letter code: Probable endonuclease 4 (289 aa).

The Zn(2+) site is built by H76, H116, E152, D186, H189, H220, D233, H235, and E265.

The protein belongs to the AP endonuclease 2 family. Zn(2+) is required as a cofactor.

The enzyme catalyses Endonucleolytic cleavage to 5'-phosphooligonucleotide end-products.. In terms of biological role, endonuclease IV plays a role in DNA repair. It cleaves phosphodiester bonds at apurinic or apyrimidinic (AP) sites, generating a 3'-hydroxyl group and a 5'-terminal sugar phosphate. This Malacoplasma penetrans (strain HF-2) (Mycoplasma penetrans) protein is Probable endonuclease 4.